Reading from the N-terminus, the 449-residue chain is GTPase Der (449 aa).

EngA-type G domains follow at residues 4-174 and 183-358; these read PIVA…PPKT and LRIA…VQRQ. Residues 10–17, 57–61, 126–129, 189–196, 236–240, and 301–304 contribute to the GTP site; these read GRPNVGKS, DTAGV, NKCD, DTAGI, and NKWD. The 86-residue stretch at 359–444 folds into the KH-like domain; it reads KRVPTSELNN…PIVIVFRSRE (86 aa).

It belongs to the TRAFAC class TrmE-Era-EngA-EngB-Septin-like GTPase superfamily. EngA (Der) GTPase family. As to quaternary structure, associates with the 50S ribosomal subunit.

In terms of biological role, GTPase that plays an essential role in the late steps of ribosome biogenesis. This is GTPase Der from Chloroflexus aurantiacus (strain ATCC 29366 / DSM 635 / J-10-fl).